A 302-amino-acid polypeptide reads, in one-letter code: Large ribosomal subunit protein uL3c (302 aa).

The transit peptide at Met1–Met36 directs the protein to the chloroplast. Positions Phe208–Ala239 are disordered.

This sequence belongs to the universal ribosomal protein uL3 family. As to quaternary structure, part of the 50S ribosomal subunit.

It is found in the plastid. It localises to the chloroplast. Its function is as follows. One of the primary rRNA binding proteins, it binds directly near the 3'-end of the 23S rRNA, where it nucleates assembly of the 50S subunit. The protein is Large ribosomal subunit protein uL3c (RPL3) of Bigelowiella natans (Pedinomonas minutissima).